Reading from the N-terminus, the 291-residue chain is G1/S-specific cyclin-D1 (291 aa).

Thr282 is modified (phosphothreonine).

It belongs to the cyclin family. Cyclin D subfamily. As to quaternary structure, interacts with the cdk4 and cdk6 protein kinases to form a serine/threonine kinase holoenzyme complex. The cyclin subunit imparts substrate specificity to the complex. Phosphorylation at Thr-282 by MAP kinases is required for ubiquitination and degradation by the DCX(AMBRA1) complex. Post-translationally, ubiquitinated by the DCX(AMBRA1) complex during the transition from G1 to S cell phase, leading to its degradation. The DCX(AMBRA1) complex represents the major regulator of CCND1 stability during the G1/S transition.

The protein resides in the nucleus. The protein localises to the cytoplasm. In terms of biological role, regulatory component of the cyclin D1-CDK4 (DC) complex that phosphorylates and inhibits members of the retinoblastoma (RB) protein family including RB1 and regulates the cell-cycle during G(1)/S transition. Phosphorylation of RB1 allows dissociation of the transcription factor E2F from the RB/E2F complex and the subsequent transcription of E2F target genes which are responsible for the progression through the G(1) phase. Hypophosphorylates RB1 in early G(1) phase. Cyclin D-CDK4 complexes are major integrators of various mitogenenic and antimitogenic signals. This chain is G1/S-specific cyclin-D1 (ccnd1), found in Xenopus laevis (African clawed frog).